The following is a 341-amino-acid chain: L-threonine 3-dehydrogenase (341 aa).

Zn(2+) is bound at residue Cys38. Catalysis depends on charge relay system residues Thr40 and His43. Residues His63, Glu64, Cys93, Cys96, Cys99, and Cys107 each contribute to the Zn(2+) site. Residues Ile175, Asp195, Arg200, 262 to 264 (LGI), and 286 to 287 (IY) contribute to the NAD(+) site.

This sequence belongs to the zinc-containing alcohol dehydrogenase family. In terms of assembly, homotetramer. It depends on Zn(2+) as a cofactor.

Its subcellular location is the cytoplasm. The enzyme catalyses L-threonine + NAD(+) = (2S)-2-amino-3-oxobutanoate + NADH + H(+). The protein operates within amino-acid degradation; L-threonine degradation via oxydo-reductase pathway; glycine from L-threonine: step 1/2. Its function is as follows. Catalyzes the NAD(+)-dependent oxidation of L-threonine to 2-amino-3-ketobutyrate. The polypeptide is L-threonine 3-dehydrogenase (Salmonella typhi).